The following is a 323-amino-acid chain: Acetyl-coenzyme A carboxylase carboxyl transferase subunit alpha 1 (323 aa).

In terms of domain architecture, CoA carboxyltransferase C-terminal spans 39–293 (RLSKKSQQLT…RRALGDSLRQ (255 aa)).

Belongs to the AccA family. As to quaternary structure, acetyl-CoA carboxylase is a heterohexamer composed of biotin carboxyl carrier protein (AccB), biotin carboxylase (AccC) and two subunits each of ACCase subunit alpha (AccA) and ACCase subunit beta (AccD).

The protein resides in the cytoplasm. It catalyses the reaction N(6)-carboxybiotinyl-L-lysyl-[protein] + acetyl-CoA = N(6)-biotinyl-L-lysyl-[protein] + malonyl-CoA. Its pathway is lipid metabolism; malonyl-CoA biosynthesis; malonyl-CoA from acetyl-CoA: step 1/1. Its function is as follows. Component of the acetyl coenzyme A carboxylase (ACC) complex. First, biotin carboxylase catalyzes the carboxylation of biotin on its carrier protein (BCCP) and then the CO(2) group is transferred by the carboxyltransferase to acetyl-CoA to form malonyl-CoA. In terms of biological role, does not confer resistance to the endogenous polyketide antibiotic thailandamide, does not confer resistance to thailandamide when expressed in S.typhimurium. The chain is Acetyl-coenzyme A carboxylase carboxyl transferase subunit alpha 1 from Burkholderia thailandensis (strain ATCC 700388 / DSM 13276 / CCUG 48851 / CIP 106301 / E264).